Consider the following 287-residue polypeptide: Centromere protein P (287 aa).

Residues 1–37 (MDNSVYQVYEDEIQLLEEEIKLLSDKYEDIQQESTFF) are a coiled coil.

Belongs to the CENP-P/CTF19 family. As to quaternary structure, component of the CENPA-HI complex, at least composed of CENPH, CENPI, CENPK, CENPL, CENPM, CENPO and CENPP.

It is found in the nucleus. Its subcellular location is the chromosome. The protein resides in the centromere. Functionally, component of the CENPA-HI complex, a centromeric complex involved in assembly of kinetochore proteins, mitotic progression and chromosome segregation. The polypeptide is Centromere protein P (CENPP) (Gallus gallus (Chicken)).